Reading from the N-terminus, the 165-residue chain is AIG2-like protein A (165 aa).

Substrate is bound at residue 15–20 (YGSFQD). Glu-83 serves as the catalytic Proton acceptor.

This sequence belongs to the gamma-glutamylcyclotransferase family. In terms of tissue distribution, expressed only in seeds.

Its function is as follows. Putative gamma-glutamylcyclotransferase. The sequence is that of AIG2-like protein A from Arabidopsis thaliana (Mouse-ear cress).